A 365-amino-acid polypeptide reads, in one-letter code: Histidinol-phosphate aminotransferase 2 (365 aa).

Position 226 is an N6-(pyridoxal phosphate)lysine (K226).

Belongs to the class-II pyridoxal-phosphate-dependent aminotransferase family. Histidinol-phosphate aminotransferase subfamily. As to quaternary structure, homodimer. Pyridoxal 5'-phosphate serves as cofactor.

The catalysed reaction is L-histidinol phosphate + 2-oxoglutarate = 3-(imidazol-4-yl)-2-oxopropyl phosphate + L-glutamate. It functions in the pathway amino-acid biosynthesis; L-histidine biosynthesis; L-histidine from 5-phospho-alpha-D-ribose 1-diphosphate: step 7/9. The chain is Histidinol-phosphate aminotransferase 2 (hisC2) from Pasteurella multocida (strain Pm70).